The chain runs to 403 residues: MAKLIVSDLDLKGKKVLVRVDFNVPIKNGVIGDDNRIVAALPTIKYIIDHGGKAILLSHLGRVKSDADKKELSLRPVAERLSELLEKPVTFVPENEGKEVEEAIDNMKDGDVVVLENTRFQDIDNDFGKRESKNDPKLGEYWASLGDVFVNDAFGTAHRSHASNVGIATAMKKAGKPAAAGYLLEKEIKFLGDAVENPVHPFVTILGGAKVSDKIGVIENLIPKSDHILIGGGMAYTFLAAQGHKIGKSLFEADKVELAKSLLEKAGDKIVLPVDNVAATEFSNDAPHEIVGDDIPDNEMGLDIGPKTVEKFRDILKDAKTVVWNGPMGAFEMPNYAEGTLEVGRALADLKDAVTIIGGGDSTAAAKQLGIAPKISHISTGGGASLNYLEGKELPGIACVSDK.

Substrate is bound by residues 21–23, Arg-36, 59–62, Arg-119, and Arg-159; these read DFN and HLGR. ATP-binding positions include Lys-214, Gly-301, Glu-332, and 359 to 362; that span reads GGDS.

This sequence belongs to the phosphoglycerate kinase family. Monomer.

Its subcellular location is the cytoplasm. The catalysed reaction is (2R)-3-phosphoglycerate + ATP = (2R)-3-phospho-glyceroyl phosphate + ADP. The protein operates within carbohydrate degradation; glycolysis; pyruvate from D-glyceraldehyde 3-phosphate: step 2/5. The chain is Phosphoglycerate kinase from Lactobacillus johnsonii (strain CNCM I-12250 / La1 / NCC 533).